Consider the following 335-residue polypeptide: Nucleoid-associated protein YejK (335 aa).

It belongs to the YejK family.

Its subcellular location is the cytoplasm. The protein localises to the nucleoid. The chain is Nucleoid-associated protein YejK from Salmonella enteritidis PT4 (strain P125109).